Reading from the N-terminus, the 770-residue chain is Cyclopiane-type diterpene synthase (770 aa).

Residues 5 to 335 (ITDEYAVGID…VPRYCKVDRN (331 aa)) are terpene cyclase. Residues Asp-97 and Asp-101 each contribute to the Mg(2+) site. Substrate is bound by residues Asp-97, Asp-101, 190-193 (RIVD), Asn-234, 238-242 (SWDKE), and 328-329 (RY). Positions 97–101 (DDETD) match the DDXXD 1 motif. An NSE/DTE motif is present at residues 234-242 (NDLFSWDKE). The tract at residues 336–720 (PYKDHLEKYG…WALRLLIMKL (385 aa)) is prenyltransferase. The segment at 371–397 (NQLKEPSSSTYKTHFSPLEPNPGPEQT) is disordered. Polar residues predominate over residues 374 to 383 (KEPSSSTYKT). Isopentenyl diphosphate-binding residues include Lys-423, Arg-426, and His-455. Positions 462 and 466 each coordinate Mg(2+). Residues 462 to 466 (DDIQD) carry the DDXXD 2 motif. Residue Arg-471 participates in dimethylallyl diphosphate binding. Arg-472 contacts isopentenyl diphosphate. Dimethylallyl diphosphate-binding residues include Lys-548, Thr-549, Gln-584, Asn-591, Lys-620, and Lys-630.

This sequence in the N-terminal section; belongs to the terpene synthase family. It in the C-terminal section; belongs to the FPP/GGPP synthase family. In terms of assembly, hexamer. Mg(2+) serves as cofactor.

It carries out the reaction isopentenyl diphosphate + (2E,6E)-farnesyl diphosphate = (2E,6E,10E)-geranylgeranyl diphosphate + diphosphate. The enzyme catalyses (2E,6E,10E)-geranylgeranyl diphosphate + H2O = (+)-penichrysol + diphosphate. It functions in the pathway secondary metabolite biosynthesis; terpenoid biosynthesis. In terms of biological role, bifunctional terpene synthase converts dimethylallyl diphosphate (DMAPP) and isopentenyl diphosphate (IPP) into a cyclopiane-type diterpene. The C-terminal prenyltransferase (PT) domain of PcCS catalyzes formation of geranylgeranyl pyrophosphate (GGPP), whereas the N-terminal terpene cyclase (TC) domain catalyzes the cyclization of GGPP to the cyclopiane-type diterpene penichrysol. This is Cyclopiane-type diterpene synthase from Penicillium chrysogenum (Penicillium notatum).